A 242-amino-acid polypeptide reads, in one-letter code: MFRRKLTALEYHNPTGFDCKDETEFRNFIVWLEDQKIRHYKIEDRGNLRNIPSSDWPKYFEKYLQDVNCPFSVQERQETVDWLLGLAVRFEYGDNVEKYRNCKPVTETNDVQKSADPLINLDSNNPDFKAGVLALANLLKIQRHDDYLVMLKAIKILVQERLTPDAIAKASQAKEGLPVTLDKHILGFDTGDATLNEAAQVLRLLHIEELRELQTKINEAIVAVQAIIADPKTDHRLGKVGR.

Belongs to the RTRAF family. As to quaternary structure, homodimer. Component of a tRNA-splicing ligase complex.

The protein localises to the nucleus. It is found in the cytoplasm. It localises to the cytosol. The protein resides in the perinuclear region. Its subcellular location is the cytoskeleton. The protein localises to the microtubule organizing center. It is found in the centrosome. Its function is as follows. RNA-binding protein involved in modulation of mRNA transcription by Polymerase II. Component of the tRNA-splicing ligase complex. This chain is RNA transcription, translation and transport factor protein, found in Danio rerio (Zebrafish).